The chain runs to 307 residues: Homoserine kinase (307 aa).

91-101 (PLARGLGSSAA) lines the ATP pocket.

The protein belongs to the GHMP kinase family. Homoserine kinase subfamily.

It is found in the cytoplasm. The enzyme catalyses L-homoserine + ATP = O-phospho-L-homoserine + ADP + H(+). Its pathway is amino-acid biosynthesis; L-threonine biosynthesis; L-threonine from L-aspartate: step 4/5. Functionally, catalyzes the ATP-dependent phosphorylation of L-homoserine to L-homoserine phosphate. The polypeptide is Homoserine kinase (Deinococcus radiodurans (strain ATCC 13939 / DSM 20539 / JCM 16871 / CCUG 27074 / LMG 4051 / NBRC 15346 / NCIMB 9279 / VKM B-1422 / R1)).